A 1349-amino-acid polypeptide reads, in one-letter code: Membrane-associated phosphatidylinositol transfer protein 2 (1349 aa).

A disordered region spans residues glutamate 262–glutamate 344. Residues lysine 302–arginine 322 are compositionally biased toward low complexity. Residues serine 337, serine 341, serine 368, and serine 589 each carry the phosphoserine modification. A compositionally biased stretch (gly residues) spans glycine 618–glycine 631. Residues glycine 618–tyrosine 671 form a disordered region. The residue at position 644 (serine 644) is a Phosphoserine. Positions glycine 653–aspartate 667 are enriched in basic and acidic residues. Phosphoserine occurs at positions 700, 701, and 702. The region spanning phenylalanine 715 to arginine 963 is the DDHD domain. Residue arginine 828 is modified to Omega-N-methylarginine. Residues leucine 876–alanine 900 are disordered. Residues alanine 878–proline 888 are compositionally biased toward pro residues. Serine 1277 bears the Phosphoserine mark. Residues threonine 1296–serine 1326 form a disordered region.

The protein belongs to the PtdIns transfer protein family. PI transfer class IIA subfamily. Interacts with PTK2B via its C-terminus. Interacts with CPNE4 (via VWFA domain). In terms of tissue distribution, highly expressed in brain, heart, ovary, testis and thymus. Detected in small intestine, prostate, pancreas, skeletal muscle, liver, colon and placenta.

The protein localises to the endomembrane system. In terms of biological role, catalyzes the transfer of phosphatidylinositol and phosphatidylcholine between membranes (in vitro). Binds calcium ions. In Homo sapiens (Human), this protein is Membrane-associated phosphatidylinositol transfer protein 2 (PITPNM2).